A 79-amino-acid polypeptide reads, in one-letter code: Conotoxin MIVA (79 aa).

An N-terminal signal peptide occupies residues 1 to 21 (MGMRMMFTVFLLVVLATTVVS). The propeptide occupies 22-38 (IPSDRASDGRNAVVHER). Residue proline 40 is modified to 4-hydroxyproline. Glutamate 41 is subject to 4-carboxyglutamate. O-linked (HexNAc...) threonine glycans are attached at residues threonine 45 and threonine 47. 4-hydroxyproline occurs at positions 55, 60, 61, 69, 70, and 74. At proline 74 the chain carries Proline amide. Positions 75–79 (GRRND) are excised as a propeptide.

Post-translationally, O-linked glycan consists of Hex4-HexNAc2 hexasaccharide. In terms of processing, contains 3 disulfide bonds. Expressed by the venom duct.

The protein localises to the secreted. Its function is as follows. Probable neurotoxin with ion channel inhibitor activity. The protein is Conotoxin MIVA of Conus magus (Magical cone).